The chain runs to 438 residues: Cyclic 2,3-diphosphoglycerate synthetase (438 aa).

The protein belongs to the cyclic 2,3-diphosphoglycerate synthetase family.

It is found in the cytoplasm. The catalysed reaction is (2R)-2,3-bisphosphoglycerate + ATP + H(+) = cyclic (2R)-2,3-bisphosphoglycerate + ADP + phosphate. Catalyzes the formation of cyclic 2,3-diphosphoglycerate (cDPG) by formation of an intramolecular phosphoanhydride bond at the expense of ATP. This is Cyclic 2,3-diphosphoglycerate synthetase from Thermococcus gammatolerans (strain DSM 15229 / JCM 11827 / EJ3).